The sequence spans 113 residues: Large ribosomal subunit protein uL24 (113 aa).

The protein belongs to the universal ribosomal protein uL24 family. Part of the 50S ribosomal subunit.

Functionally, one of two assembly initiator proteins, it binds directly to the 5'-end of the 23S rRNA, where it nucleates assembly of the 50S subunit. One of the proteins that surrounds the polypeptide exit tunnel on the outside of the subunit. The polypeptide is Large ribosomal subunit protein uL24 (Rickettsia prowazekii (strain Madrid E)).